The following is a 609-amino-acid chain: Numb-like protein (609 aa).

Disordered stretches follow at residues 1-68 (MSRS…QWQA), 223-283 (GSFR…PVAA), 372-421 (ASAG…EEVS), 434-464 (QQQQ…QPFP), and 537-609 (AGAF…EIEL). The span at 19-29 (PPAPCGAPGPP) shows a compositional bias: pro residues. A PID domain is found at 74 to 223 (RKGTCSFPVR…ASRTSFAREG (150 aa)). Phosphoserine occurs at positions 224 and 228. Positions 233-245 (PAEREAPDKKKAE) are enriched in basic and acidic residues. Residues 246 to 259 (AAAAPTVAPGPAQP) are compositionally biased toward low complexity. Ser-263 carries the phosphoserine modification. Thr-279 carries the post-translational modification Phosphothreonine. Residues 409 to 418 (TPSEAERWLE) are compositionally biased toward basic and acidic residues. Residue Ser-411 is modified to Phosphoserine. Over residues 434-446 (QQQQQQQQQQQQQ) the composition is skewed to low complexity. Pro residues-rich tracts occupy residues 454–464 (PTMPPALQPFP) and 558–573 (NGAP…PAPE).

In terms of assembly, interacts (via PTB domain) with MAP3K7IP2 (via C-terminal). Interacts (via C-terminal) with TRAF6 (via TRAF domains). Associates with EPS15 and NOTCH1.

It is found in the cytoplasm. Plays a role in the process of neurogenesis. Required throughout embryonic neurogenesis to maintain neural progenitor cells, also called radial glial cells (RGCs), by allowing their daughter cells to choose progenitor over neuronal cell fate. Not required for the proliferation of neural progenitor cells before the onset of embryonic neurogenesis. Also required postnatally in the subventricular zone (SVZ) neurogenesis by regulating SVZ neuroblasts survival and ependymal wall integrity. Negative regulator of NF-kappa-B signaling pathway. The inhibition of NF-kappa-B activation is mediated at least in part, by preventing MAP3K7IP2 to interact with polyubiquitin chains of TRAF6 and RIPK1 and by stimulating the 'Lys-48'-linked polyubiquitination and degradation of TRAF6 in cortical neurons. The sequence is that of Numb-like protein (NUMBL) from Homo sapiens (Human).